The chain runs to 548 residues: Sesquiterpene synthase 9 (548 aa).

The Mg(2+) site is built by Asp-300, Asp-304, and Glu-453. Residues 300-304 (DDTFD) carry the DDXXD motif motif.

This sequence belongs to the terpene synthase family. Tpsa subfamily. Requires Mg(2+) as cofactor. The cofactor is Mn(2+). In terms of tissue distribution, mostly expressed in stem and trichomes, to a lower extent in roots, leaves and flowers and, at low levels, in fruits.

The protein localises to the cytoplasm. It catalyses the reaction (2E,6E)-farnesyl diphosphate = germacrene C + diphosphate. It carries out the reaction (2E)-geranyl diphosphate = terpinolene + diphosphate. The catalysed reaction is (2E)-geranyl diphosphate = limonene + diphosphate. The enzyme catalyses (2E)-geranyl diphosphate = beta-myrcene + diphosphate. It catalyses the reaction (2Z,6Z)-farnesyl diphosphate = germacrene C + diphosphate. Its pathway is secondary metabolite biosynthesis; terpenoid biosynthesis. In terms of biological role, involved in the biosynthesis of germacrene C, one of the most abundant sesquiterpene in the leaf oil of tomato. Produces mainly germacrene C, but also smaller amounts of germacrene A, B and D when used with farnesyl diphosphate (FPP) as substrate; able to use both (2E,6E)-farnesyl diphosphate ((EE)-FPP) and (2Z,6Z)-farnesyl diphosphate ((ZZ)-FPP). No or low activity with geranylgeranyl diphosphate (GGPP). Can act with a low efficiency as a monoterpene synthase with geranyl diphosphate (GPP) as substrate, thus producing beta-myrcene, limonene and terpinolene. The sequence is that of Sesquiterpene synthase 9 from Solanum lycopersicum (Tomato).